The primary structure comprises 256 residues: Hydroxyacylglutathione hydrolase (256 aa).

His58, His60, Asp62, His63, His116, Asp135, and His173 together coordinate Zn(2+).

The protein belongs to the metallo-beta-lactamase superfamily. Glyoxalase II family. As to quaternary structure, monomer. Zn(2+) is required as a cofactor.

The enzyme catalyses an S-(2-hydroxyacyl)glutathione + H2O = a 2-hydroxy carboxylate + glutathione + H(+). It participates in secondary metabolite metabolism; methylglyoxal degradation; (R)-lactate from methylglyoxal: step 2/2. In terms of biological role, thiolesterase that catalyzes the hydrolysis of S-D-lactoyl-glutathione to form glutathione and D-lactic acid. The chain is Hydroxyacylglutathione hydrolase from Hyphomonas neptunium (strain ATCC 15444).